The sequence spans 197 residues: uncharacterized protein (197 aa).

The region spanning 33 to 184 is the SIS domain; that stretch reads MISKIMDASS…IAEFMSILGK (152 aa).

The protein belongs to the SIS family. PHI subfamily.

This is an uncharacterized protein from Methanothermobacter thermautotrophicus (strain ATCC 29096 / DSM 1053 / JCM 10044 / NBRC 100330 / Delta H) (Methanobacterium thermoautotrophicum).